Reading from the N-terminus, the 745-residue chain is Single-minded homolog 1-A (745 aa).

Residues 1–53 (MKEKSKNAGRTRREKENSEFYELAKLLPLPSAITSQSDKASIIRLTTSYLKMR) enclose the bHLH domain. PAS domains follow at residues 77–147 (GREL…QPYH) and 218–288 (PPSA…LVKG). Positions 336–745 (EYKGLQLSLD…GTSVIITNGS (410 aa)) constitute a Single-minded C-terminal domain. Over residues 350 to 364 (TKPSFTYNSPSNPVT) the composition is skewed to polar residues. Disordered stretches follow at residues 350–413 (TKPS…LTDS) and 529–563 (EDSAVSSAPDGGSASDSGDRFRADQCRSSPQEPSK). The short motif at 368 to 387 (RVGKSRVSRTKTKTRLSPYS) is the Nuclear localization signal element. Over residues 369 to 381 (VGKSRVSRTKTKT) the composition is skewed to basic residues. Residues 532–544 (AVSSAPDGGSASD) show a composition bias toward low complexity.

In terms of assembly, efficient DNA binding requires dimerization with another bHLH protein. Heterodimer of sim1a and arnt. Expressed in embryonic forebrain at the eleven somite stage. Detected in brain throughout embryonic development.

The protein resides in the nucleus. In terms of biological role, transcriptional factor that may have pleiotropic effects during embryogenesis and in the adult. In Danio rerio (Zebrafish), this protein is Single-minded homolog 1-A (sim1a).